A 189-amino-acid chain; its full sequence is Small ribosomal subunit protein uS5 (189 aa).

The 64-residue stretch at 20–83 (FVDRLVHINR…ESAKRALIRV (64 aa)) folds into the S5 DRBM domain.

Belongs to the universal ribosomal protein uS5 family. In terms of assembly, part of the 30S ribosomal subunit. Contacts proteins S4 and S8.

With S4 and S12 plays an important role in translational accuracy. In terms of biological role, located at the back of the 30S subunit body where it stabilizes the conformation of the head with respect to the body. The chain is Small ribosomal subunit protein uS5 from Beijerinckia indica subsp. indica (strain ATCC 9039 / DSM 1715 / NCIMB 8712).